The chain runs to 144 residues: MRLNTIKPGAGSKSAGKRVGRGIGSGLGKTCGRGHKGQKSRAGGFHKVGFEGGQMPLQRRLPKRGFVSLTRGRCAEVRLSELAQLPVEDVDLLVLKQAGVIAADALSAKVVLSGAISKKVVLRGIAATAGARAAIEAAGGSCGE.

The interval 1–51 is disordered; the sequence is MRLNTIKPGAGSKSAGKRVGRGIGSGLGKTCGRGHKGQKSRAGGFHKVGFE. Over residues 21–31 the composition is skewed to gly residues; the sequence is RGIGSGLGKTC.

Belongs to the universal ribosomal protein uL15 family. In terms of assembly, part of the 50S ribosomal subunit.

In terms of biological role, binds to the 23S rRNA. The chain is Large ribosomal subunit protein uL15 from Azoarcus sp. (strain BH72).